Here is a 985-residue protein sequence, read N- to C-terminus: Alanine--tRNA ligase, mitochondrial (985 aa).

Residues 1–23 (MAASVAAAAGRLRRAIGRSCPWQ) constitute a mitochondrion transit peptide. Residues Arg-105, His-123, Trp-205, and 235–237 (LWN) contribute to the ATP site. Residues Asn-237 and Asp-260 each coordinate L-alanine. Gly-264 provides a ligand contact to ATP. Residues His-632, His-636, Cys-749, and His-753 each coordinate Zn(2+).

Belongs to the class-II aminoacyl-tRNA synthetase family. Monomer. Requires Zn(2+) as cofactor.

It is found in the mitochondrion. It catalyses the reaction tRNA(Ala) + L-alanine + ATP = L-alanyl-tRNA(Ala) + AMP + diphosphate. The enzyme catalyses (S)-lactate + ATP + H(+) = (S)-lactoyl-AMP + diphosphate. It carries out the reaction (S)-lactoyl-AMP + L-lysyl-[protein] = N(6)-[(S)-lactoyl]-L-lysyl-[protein] + AMP + 2 H(+). Catalyzes the attachment of alanine to tRNA(Ala) in a two-step reaction: alanine is first activated by ATP to form Ala-AMP and then transferred to the acceptor end of tRNA(Ala). Also edits incorrectly charged tRNA(Ala) via its editing domain. In presence of high levels of lactate, also acts as a protein lactyltransferase that mediates lactylation of lysine residues in target proteins, such as CGAS. Acts as an inhibitor of cGAS/STING signaling by catalyzing lactylation of CGAS, preventing the formation of liquid-like droplets in which CGAS is activated. The sequence is that of Alanine--tRNA ligase, mitochondrial (Aars2) from Rattus norvegicus (Rat).